A 195-amino-acid chain; its full sequence is Phosphoheptose isomerase (195 aa).

In terms of domain architecture, SIS spans 37–195; sequence ISDSFKQHGK…IEFEMAKIRQ (159 aa). 52–54 is a binding site for substrate; sequence NGG. 2 residues coordinate Zn(2+): His61 and Glu65. Residues Glu65, 93 to 94, 119 to 121, Ser124, and Gln172 each bind substrate; these read ND and STS. 2 residues coordinate Zn(2+): Gln172 and His180.

It belongs to the SIS family. GmhA subfamily. In terms of assembly, homotetramer. It depends on Zn(2+) as a cofactor.

The protein localises to the cytoplasm. It carries out the reaction 2 D-sedoheptulose 7-phosphate = D-glycero-alpha-D-manno-heptose 7-phosphate + D-glycero-beta-D-manno-heptose 7-phosphate. It functions in the pathway carbohydrate biosynthesis; D-glycero-D-manno-heptose 7-phosphate biosynthesis; D-glycero-alpha-D-manno-heptose 7-phosphate and D-glycero-beta-D-manno-heptose 7-phosphate from sedoheptulose 7-phosphate: step 1/1. In terms of biological role, catalyzes the isomerization of sedoheptulose 7-phosphate in D-glycero-D-manno-heptose 7-phosphate. The sequence is that of Phosphoheptose isomerase from Histophilus somni (strain 2336) (Haemophilus somnus).